We begin with the raw amino-acid sequence, 278 residues long: MKRIHLHLLSDSTGETLEMIAKAALAQFENADVVRHFWPMVRSRQHLERIVPELSNNPGLVLFTLVNAETRRALRDHCRRLSLPAVDALDEVTAALEVQLGQEAHGRPGRQHKMDEAYFKRVEAIQFTIAHDDGVGWENWEEADIVLAGVSRSSKTPTSIYLANRGYKVANIPLVMESPPPPALYELKNPMVVGLTTAPERLVQIRRNRLLTLNEQAETSYVEKDRVTEEVKFARRLFSDNNWPVIDVTRRSIEETAAAVIRLHNERHARVKPGEKPI.

149–156 (GVSRSSKT) is a binding site for ADP.

It belongs to the pyruvate, phosphate/water dikinase regulatory protein family. PDRP subfamily.

The enzyme catalyses N(tele)-phospho-L-histidyl/L-threonyl-[pyruvate, phosphate dikinase] + ADP = N(tele)-phospho-L-histidyl/O-phospho-L-threonyl-[pyruvate, phosphate dikinase] + AMP + H(+). It carries out the reaction N(tele)-phospho-L-histidyl/O-phospho-L-threonyl-[pyruvate, phosphate dikinase] + phosphate + H(+) = N(tele)-phospho-L-histidyl/L-threonyl-[pyruvate, phosphate dikinase] + diphosphate. In terms of biological role, bifunctional serine/threonine kinase and phosphorylase involved in the regulation of the pyruvate, phosphate dikinase (PPDK) by catalyzing its phosphorylation/dephosphorylation. The sequence is that of Putative pyruvate, phosphate dikinase regulatory protein from Erythrobacter litoralis (strain HTCC2594).